The chain runs to 1556 residues: Ras guanine nucleotide exchange factor G (1556 aa).

Disordered stretches follow at residues 19–63 (IGNI…KNRG), 93–141 (LQLN…SSTT), 163–239 (SHVT…LSPS), and 254–296 (ATDS…NNNS). 2 stretches are compositionally biased toward low complexity: residues 25 to 54 (NNNN…SGSN) and 96 to 141 (NDTD…SSTT). The span at 170–186 (DDDDDDESSSSEEDFDS) shows a compositional bias: acidic residues. Residues 196 to 216 (TSSTTATTTTTTTSVSPLTSS) are compositionally biased toward low complexity. Residues 256 to 271 (DSDNQSLEPCNNKTIV) are compositionally biased toward polar residues. The segment covering 279-295 (DNNNNHNNNNNNNNNNN) has biased composition (low complexity). Residues 307–353 (NKTFLDLDEKIYLKIFGYLFAEDLCSINRVSKHLCNIINNQQLWKDL) form the F-box 1 domain. Residues 385-416 (NNNNNNNNNNNNNNNNSNISNNNNNINNSNGN) are disordered. Residues 679–726 (VFDISRVSDILLIKIFRNLDSIKDLSVCQRVSKRWNKAIAISSLWEQL) form the F-box 2 domain. 2 disordered regions span residues 762–815 (QPSP…NGLN) and 827–1101 (GSNL…ITNN). A compositionally biased stretch (low complexity) spans 827-848 (GSNLSNGGNSGSSFSPFNPLSG). Over residues 849 to 866 (SNGGSSFGPFGSGGGGGS) the composition is skewed to gly residues. 2 stretches are compositionally biased toward low complexity: residues 867-880 (NSNI…LNSS) and 888-910 (FLAM…TIST). Polar residues predominate over residues 911-935 (NCTPTGGSTTNSPNFQSPMVSSSTV). Composition is skewed to low complexity over residues 943-957 (SPNL…ISLS) and 972-1053 (PDSS…IQPI). A compositionally biased stretch (polar residues) spans 1059–1076 (VNNNGSQSDLSKISDLNA). Residues 1077–1101 (NPNTTTTTTTNTIESSSSSSSITNN) show a composition bias toward low complexity. One can recognise an N-terminal Ras-GEF domain in the interval 1116–1244 (MINVQKLMNL…LIRSFSRKLS (129 aa)). Residues 1254–1279 (IGITGGKSSRKGGGSGSGSGSGGGSG) are disordered. Positions 1264–1279 (KGGGSGSGSGSGGGSG) are enriched in gly residues. The Ras-GEF domain maps to 1317-1548 (PAEEIAKQLT…YRVSMQREPR (232 aa)).

Its function is as follows. Promotes the exchange of Ras-bound GDP by GTP. This chain is Ras guanine nucleotide exchange factor G (gefG), found in Dictyostelium discoideum (Social amoeba).